The following is a 376-amino-acid chain: Putative phosphoserine aminotransferase (376 aa).

Residues 1-30 (MADQLTPSLDIPAALKPRDGRFGSGPSKVR) form a disordered region. Arg50 provides a ligand contact to L-glutamate. Pyridoxal 5'-phosphate-binding positions include 84-85 (AT), Phe108, Thr154, Asp176, and Gln199. Position 200 is an N6-(pyridoxal phosphate)lysine (Lys200). 251 to 252 (NT) serves as a coordination point for pyridoxal 5'-phosphate.

The protein belongs to the class-V pyridoxal-phosphate-dependent aminotransferase family. SerC subfamily. Homodimer. The cofactor is pyridoxal 5'-phosphate.

Its subcellular location is the cytoplasm. The catalysed reaction is O-phospho-L-serine + 2-oxoglutarate = 3-phosphooxypyruvate + L-glutamate. It catalyses the reaction 4-(phosphooxy)-L-threonine + 2-oxoglutarate = (R)-3-hydroxy-2-oxo-4-phosphooxybutanoate + L-glutamate. It functions in the pathway amino-acid biosynthesis; L-serine biosynthesis; L-serine from 3-phospho-D-glycerate: step 2/3. The protein operates within cofactor biosynthesis; pyridoxine 5'-phosphate biosynthesis; pyridoxine 5'-phosphate from D-erythrose 4-phosphate: step 3/5. Functionally, catalyzes the reversible conversion of 3-phosphohydroxypyruvate to phosphoserine and of 3-hydroxy-2-oxo-4-phosphonooxybutanoate to phosphohydroxythreonine. This is Putative phosphoserine aminotransferase from Mycobacterium leprae (strain TN).